A 254-amino-acid polypeptide reads, in one-letter code: tRNA (guanine-N(1)-)-methyltransferase (254 aa).

S-adenosyl-L-methionine-binding positions include Gly-117 and 136–141 (LGDFVL).

The protein belongs to the RNA methyltransferase TrmD family. In terms of assembly, homodimer.

The protein resides in the cytoplasm. The catalysed reaction is guanosine(37) in tRNA + S-adenosyl-L-methionine = N(1)-methylguanosine(37) in tRNA + S-adenosyl-L-homocysteine + H(+). Functionally, specifically methylates guanosine-37 in various tRNAs. In Levilactobacillus brevis (strain ATCC 367 / BCRC 12310 / CIP 105137 / JCM 1170 / LMG 11437 / NCIMB 947 / NCTC 947) (Lactobacillus brevis), this protein is tRNA (guanine-N(1)-)-methyltransferase.